Consider the following 483-residue polypeptide: Cysteine proteinase 1, mitochondrial (483 aa).

A mitochondrion-targeting transit peptide spans 1–30 (MLPTSVSRSLYLKTFRSHLLRAPQIVLKRM). Active-site residues include Cys102, His398, and Asn421. Residue Lys483 is a propeptide, removed in mature form; by autocatalysis.

This sequence belongs to the peptidase C1 family. In terms of assembly, homohexamer. Binds to nucleic acids. Binds single-stranded DNA and RNA with higher affinity than double-stranded DNA. The N-terminus of isoform Cytoplasmic is blocked.

It localises to the mitochondrion. Its subcellular location is the cytoplasm. It carries out the reaction Inactivates bleomycin B2 (a cytotoxic glycometallopeptide) by hydrolysis of a carboxyamide bond of beta-aminoalanine, but also shows general aminopeptidase activity. The specificity varies somewhat with source, but amino acid arylamides of Met, Leu and Ala are preferred.. With respect to regulation, inhibited by E64, a specific inhibitor of cysteine proteases, N-ethylmaleimide, iodacetamide, and mercury and zinc ions. The normal physiological role of the enzyme is unknown, but it is not essential for the viability of yeast cells. Has aminopeptidase activity, shortening substrate peptides sequentially by 1 amino acid. Has bleomycin hydrolase activity, which can protect the cell from the toxic effects of bleomycin. Has homocysteine-thiolactonase activity, protecting the cell against homocysteine toxicity. Acts as a repressor in the GAL4 regulatory system, but this does not require either the peptidase or nucleic acid-binding activities. This chain is Cysteine proteinase 1, mitochondrial (LAP3), found in Saccharomyces cerevisiae (strain AWRI1631) (Baker's yeast).